Consider the following 208-residue polypeptide: Large ribosomal subunit protein uL3 (208 aa).

Position 149 is an N5-methylglutamine (Gln-149).

It belongs to the universal ribosomal protein uL3 family. Part of the 50S ribosomal subunit. Forms a cluster with proteins L14 and L19. Methylated by PrmB.

One of the primary rRNA binding proteins, it binds directly near the 3'-end of the 23S rRNA, where it nucleates assembly of the 50S subunit. The polypeptide is Large ribosomal subunit protein uL3 (Haemophilus influenzae (strain 86-028NP)).